The sequence spans 337 residues: Aspartate carbamoyltransferase catalytic subunit (337 aa).

Carbamoyl phosphate is bound by residues Arg59 and Thr60. L-aspartate is bound at residue Lys87. Carbamoyl phosphate-binding residues include Arg109, His142, and Gln145. L-aspartate-binding residues include Arg182 and Arg253. The carbamoyl phosphate site is built by Gly294 and Pro295.

Belongs to the aspartate/ornithine carbamoyltransferase superfamily. ATCase family. In terms of assembly, heterododecamer (2C3:3R2) of six catalytic PyrB chains organized as two trimers (C3), and six regulatory PyrI chains organized as three dimers (R2).

The catalysed reaction is carbamoyl phosphate + L-aspartate = N-carbamoyl-L-aspartate + phosphate + H(+). The protein operates within pyrimidine metabolism; UMP biosynthesis via de novo pathway; (S)-dihydroorotate from bicarbonate: step 2/3. In terms of biological role, catalyzes the condensation of carbamoyl phosphate and aspartate to form carbamoyl aspartate and inorganic phosphate, the committed step in the de novo pyrimidine nucleotide biosynthesis pathway. This chain is Aspartate carbamoyltransferase catalytic subunit, found in Prochlorococcus marinus (strain MIT 9211).